The sequence spans 457 residues: Argininosuccinate lyase (457 aa).

The protein belongs to the lyase 1 family. Argininosuccinate lyase subfamily.

It is found in the cytoplasm. It carries out the reaction 2-(N(omega)-L-arginino)succinate = fumarate + L-arginine. Its pathway is amino-acid biosynthesis; L-arginine biosynthesis; L-arginine from L-ornithine and carbamoyl phosphate: step 3/3. The chain is Argininosuccinate lyase from Escherichia fergusonii (strain ATCC 35469 / DSM 13698 / CCUG 18766 / IAM 14443 / JCM 21226 / LMG 7866 / NBRC 102419 / NCTC 12128 / CDC 0568-73).